The following is a 476-amino-acid chain: Alkaline phosphatase H (476 aa).

The first 26 residues, 1 to 26 (MTPGYPLALSLAVSMAVLGSALPAQA), serve as a signal peptide directing secretion. Asp77 lines the Mg(2+) pocket. Asp77 is a binding site for Zn(2+). Ser128 (phosphoserine intermediate) is an active-site residue. Ser128 bears the Phosphoserine mark. Mg(2+)-binding residues include Asp179 and Thr181. Ser206 is subject to Phosphoserine. Position 346 (Gln346) interacts with Mg(2+). Zn(2+) contacts are provided by Asp353, His357, Asp395, His396, and His438.

The protein belongs to the alkaline phosphatase family. Mg(2+) is required as a cofactor. Zn(2+) serves as cofactor.

The protein resides in the secreted. It is found in the periplasm. The catalysed reaction is a phosphate monoester + H2O = an alcohol + phosphate. Has only phosphomonoesterase activity. This is Alkaline phosphatase H (phoA) from Pseudomonas aeruginosa (strain UCBPP-PA14).